Consider the following 312-residue polypeptide: Ribosomal RNA small subunit methyltransferase H (312 aa).

S-adenosyl-L-methionine is bound by residues 35–37 (GGH), Asp-54, Phe-81, Asp-100, and Gln-107.

This sequence belongs to the methyltransferase superfamily. RsmH family.

The protein resides in the cytoplasm. The catalysed reaction is cytidine(1402) in 16S rRNA + S-adenosyl-L-methionine = N(4)-methylcytidine(1402) in 16S rRNA + S-adenosyl-L-homocysteine + H(+). Functionally, specifically methylates the N4 position of cytidine in position 1402 (C1402) of 16S rRNA. This Campylobacter jejuni subsp. jejuni serotype O:2 (strain ATCC 700819 / NCTC 11168) protein is Ribosomal RNA small subunit methyltransferase H.